The chain runs to 424 residues: Deoxyguanosinetriphosphate triphosphohydrolase-like protein (424 aa).

The disordered stretch occupies residues 1-27; sequence MYPYSDADAFRRQPERAKSSQLRTSAV. Over residues 8-18 the composition is skewed to basic and acidic residues; the sequence is DAFRRQPERAK. An HD domain is found at 67 to 217; the sequence is RLTHSLEVAQ…MDFSDDIAYS (151 aa).

Belongs to the dGTPase family. Type 2 subfamily.

The chain is Deoxyguanosinetriphosphate triphosphohydrolase-like protein (dgt) from Corynebacterium glutamicum (strain ATCC 13032 / DSM 20300 / JCM 1318 / BCRC 11384 / CCUG 27702 / LMG 3730 / NBRC 12168 / NCIMB 10025 / NRRL B-2784 / 534).